Reading from the N-terminus, the 102-residue chain is Large ribosomal subunit protein bL21 (102 aa).

It belongs to the bacterial ribosomal protein bL21 family. As to quaternary structure, part of the 50S ribosomal subunit. Contacts protein L20.

Functionally, this protein binds to 23S rRNA in the presence of protein L20. This is Large ribosomal subunit protein bL21 from Levilactobacillus brevis (strain ATCC 367 / BCRC 12310 / CIP 105137 / JCM 1170 / LMG 11437 / NCIMB 947 / NCTC 947) (Lactobacillus brevis).